A 122-amino-acid polypeptide reads, in one-letter code: Ribonuclease P protein component (122 aa).

This sequence belongs to the RnpA family. As to quaternary structure, consists of a catalytic RNA component (M1 or rnpB) and a protein subunit.

It carries out the reaction Endonucleolytic cleavage of RNA, removing 5'-extranucleotides from tRNA precursor.. Its function is as follows. RNaseP catalyzes the removal of the 5'-leader sequence from pre-tRNA to produce the mature 5'-terminus. It can also cleave other RNA substrates such as 4.5S RNA. The protein component plays an auxiliary but essential role in vivo by binding to the 5'-leader sequence and broadening the substrate specificity of the ribozyme. This Roseiflexus castenholzii (strain DSM 13941 / HLO8) protein is Ribonuclease P protein component.